Consider the following 240-residue polypeptide: Intestine-specific homeobox (240 aa).

The interval 36–82 (PTERRSLPRPQSICKEDSRQTTIPGSKLERPPQDQPQEEKKNKRRVR) is disordered. Positions 62 to 76 (KLERPPQDQPQEEKK) are enriched in basic and acidic residues. The segment at residues 78-137 (KRRVRTTFTTEQLQELEKLFHFTHYPDIHVRSQLASRINLPEARVQIWFQNQRAKWRKQE) is a DNA-binding region (homeobox).

Expressed in intestinal epithelial cells from the duodenum to the proximal colon.

Its subcellular location is the nucleus. Transcription factor that regulates gene expression in intestine. May participate in vitamin A metabolism most likely by regulating BCO1 expression in the intestine. This Mus musculus (Mouse) protein is Intestine-specific homeobox (Isx).